The sequence spans 211 residues: tRNA (guanine-N(7)-)-methyltransferase (211 aa).

S-adenosyl-L-methionine contacts are provided by glutamate 43, glutamate 68, aspartate 95, and aspartate 117. The active site involves aspartate 117. Residues lysine 121, aspartate 153, and threonine 190–glutamate 193 each bind substrate.

Belongs to the class I-like SAM-binding methyltransferase superfamily. TrmB family.

It carries out the reaction guanosine(46) in tRNA + S-adenosyl-L-methionine = N(7)-methylguanosine(46) in tRNA + S-adenosyl-L-homocysteine. Its pathway is tRNA modification; N(7)-methylguanine-tRNA biosynthesis. In terms of biological role, catalyzes the formation of N(7)-methylguanine at position 46 (m7G46) in tRNA. This Staphylococcus carnosus (strain TM300) protein is tRNA (guanine-N(7)-)-methyltransferase.